Consider the following 485-residue polypeptide: MSSSLKQLKEQFVSDLTGGTIEEIYAVTSIALSSYLSFRLLKKSLGDLALIYDYILNVLTILASITVYSNSPSYLHYFIVIPSLVIYLVNYHVEKPSSPHRQNDTKEDKSDELLPRKQFITAYRSQMLIITNLAILAVDFPIFPRRFAKVETWGTSMMDLGVGSFVFSMGLANSRQLIKNHTDNYKFSWKSYLKTIKQNFIKSVPILVLGAIRFVSVKQLDYQEHETEYGIHWNFFFTLGFLPIVLGILDPVLNLVPRFIIGIGISIAYEVALNKTGLLKFILSSENRLESLITMNKEGIFSFIGYLCIFIIGQSFGSFVLTGYKTKNNLITISKIRISKKQHKKESSSFFSVATTQGLYLACIFYHLAFSLFISNLSFLQPISRRLANFPYVMWVVSYNATFLLCYDLIEKFIPGNLTSTVLDSINNNGLFIFLVSNLLTGFINMSINTLETSNKMAVIILIGYSLTWTLLALYLDKRKIYIKL.

2 helical membrane passes run 48–68 and 73–93; these read LALIYDYILNVLTILASITVY and SYLHYFIVIPSLVIYLVNYHV. Residue asparagine 103 is glycosylated (N-linked (GlcNAc...) asparagine). 2 helical membrane passes run 123-143 and 152-172; these read YRSQMLIITNLAILAVDFPIF and TWGTSMMDLGVGSFVFSMGLA. A glycan (N-linked (GlcNAc...) asparagine) is linked at asparagine 180. A run of 6 helical transmembrane segments spans residues 200–217, 229–249, 259–279, 300–320, 359–379, and 390–410; these read FIKSVPILVLGAIRFVSV, YGIHWNFFFTLGFLPIVLGIL, FIIGIGISIAYEVALNKTGLL, IFSFIGYLCIFIIGQSFGSFV, LYLACIFYHLAFSLFISNLSF, and FPYVMWVVSYNATFLLCYDLI. N-linked (GlcNAc...) asparagine glycosylation occurs at asparagine 417. Transmembrane regions (helical) follow at residues 431–451 and 457–477; these read LFIFLVSNLLTGFINMSINTL and MAVIILIGYSLTWTLLALYLD.

It belongs to the PIGW family.

It is found in the endoplasmic reticulum membrane. The protein operates within glycolipid biosynthesis; glycosylphosphatidylinositol-anchor biosynthesis. Probable acetyltransferase, which acetylates the inositol ring of phosphatidylinositol during biosynthesis of GPI-anchor. This chain is GPI-anchored wall transfer protein 1 (GWT1), found in Candida albicans (strain SC5314 / ATCC MYA-2876) (Yeast).